The primary structure comprises 426 residues: 26S proteasome regulatory subunit 7 (426 aa).

209–216 is an ATP binding site; it reads GPPGTGKT.

This sequence belongs to the AAA ATPase family.

The protein localises to the cytoplasm. Its subcellular location is the nucleus. Its function is as follows. The 26S proteasome is involved in the ATP-dependent degradation of ubiquitinated proteins. The regulatory (or ATPase) complex confers ATP dependency and substrate specificity to the 26S complex. The sequence is that of 26S proteasome regulatory subunit 7 (RPT1) from Spinacia oleracea (Spinach).